The following is a 129-amino-acid chain: Probable protein cornichon homolog 2 (129 aa).

Transmembrane regions (helical) follow at residues 45–65 (FIVQGVLCVFYLLTGHWFMTL) and 105–125 (LAYIVLNLFLTIFWMIYSALD).

This sequence belongs to the cornichon family.

The protein localises to the membrane. The sequence is that of Probable protein cornichon homolog 2 from Arabidopsis thaliana (Mouse-ear cress).